The sequence spans 368 residues: Methionine import ATP-binding protein MetN (368 aa).

Residues isoleucine 5 to isoleucine 260 form the ABC transporter domain. Residue glycine 41–serine 48 coordinates ATP.

This sequence belongs to the ABC transporter superfamily. Methionine importer (TC 3.A.1.24) family. The complex is composed of two ATP-binding proteins (MetN), two transmembrane proteins (MetI) and a solute-binding protein (MetQ).

The protein localises to the cell membrane. The enzyme catalyses L-methionine(out) + ATP + H2O = L-methionine(in) + ADP + phosphate + H(+). It carries out the reaction D-methionine(out) + ATP + H2O = D-methionine(in) + ADP + phosphate + H(+). Its function is as follows. Part of the ABC transporter complex MetNIQ involved in methionine import. Responsible for energy coupling to the transport system. This is Methionine import ATP-binding protein MetN from Lactococcus lactis subsp. lactis (strain IL1403) (Streptococcus lactis).